The following is a 907-amino-acid chain: Phosphoenolpyruvate carboxylase (907 aa).

Catalysis depends on residues histidine 138 and lysine 570.

Belongs to the PEPCase type 1 family. Requires Mg(2+) as cofactor.

The catalysed reaction is oxaloacetate + phosphate = phosphoenolpyruvate + hydrogencarbonate. Forms oxaloacetate, a four-carbon dicarboxylic acid source for the tricarboxylic acid cycle. The polypeptide is Phosphoenolpyruvate carboxylase (Streptococcus mutans serotype c (strain ATCC 700610 / UA159)).